Consider the following 295-residue polypeptide: DegV domain-containing protein MG326 (295 aa).

Residues 4 to 292 (TAIITDSTAS…IDAFSISLLI (289 aa)) enclose the DegV domain. Residues Thr-63 and Ser-95 each coordinate hexadecanoate.

Functionally, may bind long-chain fatty acids, such as palmitate, and may play a role in lipid transport or fatty acid metabolism. The polypeptide is DegV domain-containing protein MG326 (Mycoplasma genitalium (strain ATCC 33530 / DSM 19775 / NCTC 10195 / G37) (Mycoplasmoides genitalium)).